A 336-amino-acid chain; its full sequence is UDP-galactose transporter 1 (336 aa).

9 helical membrane-spanning segments follow: residues 11–31 (LAILQWWGFNVTVIIMNKWIF), 38–58 (FPLSVSCVHFICSSIGAYIVI), 83–103 (FVFCINIVLGNVSLRYIPVSF), 131–151 (IWASLVPIVGGILLTSVTELS), 154–174 (MFGFCAALFGCLATSTKTILA), 193–213 (APFATMILGIPALLLEGSGIL), 227–247 (IIILSSGVLAFCLNFSIFYVI), 254–274 (TFNVAGNLKVAVAVMVSWLIF), and 278–298 (ISYMNAVGCGITLVGCTFYGY).

The protein belongs to the TPT transporter family. TPT (TC 2.A.7.9) subfamily.

The protein localises to the membrane. In terms of biological role, nucleotide sugar transporter that specifically transports UDP-galactose. In Arabidopsis thaliana (Mouse-ear cress), this protein is UDP-galactose transporter 1.